The primary structure comprises 283 residues: MEITEKAPAKLNLFLDTPFNHPDGLPEWNMIMTSVDLADYVKIESIPGKMGIKVRTNTGFLPNDSRNLAYQAARILQEKYHVRAKVIIEIRKHIPVAAGLGGGSSDAAAVLRGLNKLWNLELSLEVLAKIGLEIDSDVPFCVYSRTAHVLGKGEKVIPLKKLPPMWVVIAKPKLSVSTPYILSKIEHKELQHSNIESILDAIEREDYTDICRYMGNVLEQVTGKEHPEVLKIKNRIKQYGADAAQMSGTGPTVFGVASKSSRAKHIVNSLKGFCHEVYLVRIL.

Lys10 is an active-site residue. 95-105 (PVAAGLGGGSS) serves as a coordination point for ATP. Residue Asp137 is part of the active site.

Belongs to the GHMP kinase family. IspE subfamily.

It carries out the reaction 4-CDP-2-C-methyl-D-erythritol + ATP = 4-CDP-2-C-methyl-D-erythritol 2-phosphate + ADP + H(+). It functions in the pathway isoprenoid biosynthesis; isopentenyl diphosphate biosynthesis via DXP pathway; isopentenyl diphosphate from 1-deoxy-D-xylulose 5-phosphate: step 3/6. In terms of biological role, catalyzes the phosphorylation of the position 2 hydroxy group of 4-diphosphocytidyl-2C-methyl-D-erythritol. This is 4-diphosphocytidyl-2-C-methyl-D-erythritol kinase from Pediococcus pentosaceus (strain ATCC 25745 / CCUG 21536 / LMG 10740 / 183-1w).